The chain runs to 648 residues: Exoribonuclease 2 (648 aa).

Residues 191–518 (RIDLTYLDFI…INHRLIKSII (328 aa)) enclose the RNB domain. The 83-residue stretch at 565–647 (KKKYQANIID…GNKKIIATMI (83 aa)) folds into the S1 motif domain.

It belongs to the RNR ribonuclease family. RNase II subfamily.

It is found in the cytoplasm. The enzyme catalyses Exonucleolytic cleavage in the 3'- to 5'-direction to yield nucleoside 5'-phosphates.. In terms of biological role, involved in mRNA degradation. Hydrolyzes single-stranded polyribonucleotides processively in the 3' to 5' direction. This chain is Exoribonuclease 2, found in Buchnera aphidicola subsp. Cinara cedri (strain Cc).